A 162-amino-acid chain; its full sequence is Phospholipase A and acyltransferase 3 (162 aa).

At 1-133 (MLAPIPEPKP…VPRSDQVRDA (133 aa)) the chain is on the cytoplasmic side. In terms of domain architecture, LRAT spans 13 to 129 (LIEIFRPMYR…LRYGVPRSDQ (117 aa)). Active-site residues include His-23 and His-35. The active-site Acyl-thioester intermediate is the Cys-113. The chain crosses the membrane as a helical span at residues 134–154 (VKAVGIAGVGLAALGLVGVML). The Lumenal portion of the chain corresponds to 155–162 (SRNKKQKQ).

This sequence belongs to the H-rev107 family. In terms of assembly, interacts with PPP2R1A; this interaction might decrease PP2A activity. Ubiquitously expressed in normal tissues but down-regulated in primary carcinomas or in many cell lines derived from tumors. Highly expressed in white adipose tissue and in adipocytes. Expressed at lower levels in brown adipose tissue.

It is found in the cell membrane. The protein resides in the cytoplasm. It localises to the cytosol. The protein localises to the perinuclear region. Its subcellular location is the peroxisome membrane. It is found in the mitochondrion membrane. The protein resides in the nucleus envelope. It localises to the lysosome membrane. The protein localises to the endoplasmic reticulum membrane. It catalyses the reaction a 1,2-diacyl-sn-glycero-3-phosphocholine + H2O = a 1-acyl-sn-glycero-3-phosphocholine + a fatty acid + H(+). The enzyme catalyses a 1,2-diacyl-sn-glycero-3-phosphocholine + H2O = a 2-acyl-sn-glycero-3-phosphocholine + a fatty acid + H(+). It carries out the reaction 1,2-dihexadecanoyl-sn-glycero-3-phosphocholine + H2O = 1-hexadecanoyl-sn-glycero-3-phosphocholine + hexadecanoate + H(+). The catalysed reaction is 1,2-dihexadecanoyl-sn-glycero-3-phosphocholine + H2O = 2-hexadecanoyl-sn-glycero-3-phosphocholine + hexadecanoate + H(+). It catalyses the reaction 1-hexadecanoyl-2-(9Z-octadecenoyl)-sn-glycero-3-phosphocholine + H2O = 2-(9Z-octadecenoyl)-sn-glycero-3-phosphocholine + hexadecanoate + H(+). The enzyme catalyses 1-hexadecanoyl-2-(9Z-octadecenoyl)-sn-glycero-3-phosphocholine + H2O = 1-hexadecanoyl-sn-glycero-3-phosphocholine + (9Z)-octadecenoate + H(+). It carries out the reaction 1-hexadecanoyl-2-(5Z,8Z,11Z,14Z-eicosatetraenoyl)-sn-glycero-3-phosphocholine + H2O = 1-hexadecanoyl-sn-glycero-3-phosphocholine + (5Z,8Z,11Z,14Z)-eicosatetraenoate + H(+). The catalysed reaction is 1-hexadecanoyl-2-(5Z,8Z,11Z,14Z-eicosatetraenoyl)-sn-glycero-3-phosphocholine + H2O = 2-(5Z,8Z,11Z,14Z)-eicosatetraenoyl-sn-glycero-3-phosphocholine + hexadecanoate + H(+). It catalyses the reaction 1-hexadecanoyl-2-(9Z,12Z-octadecadienoyl)-sn-glycero-3-phosphoethanolamine + H2O = 1-hexadecanoyl-sn-glycero-3-phosphoethanolamine + (9Z,12Z)-octadecadienoate + H(+). The enzyme catalyses 1-hexadecanoyl-2-(9Z,12Z-octadecadienoyl)-sn-glycero-3-phosphoethanolamine + H2O = 2-(9Z,12Z)-octadecadienoyl-sn-glycero-3-phosphoethanolamine + hexadecanoate + H(+). It carries out the reaction 1-hexadecanoyl-2-(5Z,8Z,11Z,14Z-eicosatetraenoyl)-sn-glycero-3-phosphoethanolamine + H2O = 1-hexadecanoyl-sn-glycero-3-phosphoethanolamine + (5Z,8Z,11Z,14Z)-eicosatetraenoate + H(+). The catalysed reaction is 1-hexadecanoyl-2-(5Z,8Z,11Z,14Z-eicosatetraenoyl)-sn-glycero-3-phosphoethanolamine + H2O = 2-(5Z,8Z,11Z,14Z)-eicosatetraenoyl-sn-glycero-3-phosphoethanolamine + hexadecanoate + H(+). It catalyses the reaction 1-hexanoyl-2-acyl-sn-glycero-3-phosphocholine + H2O = hexanoate + a 2-acyl-sn-glycero-3-phosphocholine + H(+). The enzyme catalyses 1-hexanoyl-2-acyl-sn-glycero-3-phosphocholine + H2O = 1-hexanoyl-sn-glycero-3-phosphocholine + a fatty acid + H(+). It carries out the reaction 1,2-diheptadecanoyl-sn-glycero-3-phosphoethanolamine + 1-(9Z-octadecenoyl)-2-hexadecanoyl-sn-glycero-3-phosphocholine = 1,2-diheptadecanoyl-sn-glycero-3-phospho-N-hexadecanoyl-ethanolamine + 1-(9Z-octadecenoyl)-sn-glycero-3-phosphocholine + H(+). The catalysed reaction is 1,2-diheptadecanoyl-sn-glycero-3-phosphoethanolamine + 1-(9Z-octadecenoyl)-2-hexadecanoyl-sn-glycero-3-phosphocholine = 1,2-diheptadecanoyl-sn-glycero-3-phospho-N-(9Z-octadecenoyl)-ethanolamine + 2-hexadecanoyl-sn-glycero-3-phosphocholine + H(+). It catalyses the reaction 1,2-dihexanoyl-sn-glycero-3-phosphoethanolamine + 2-heptanoyl-sn-glycero-3-phosphocholine = hexanoyl-sn-glycero-3-phosphoethanolamine + 1-hexanoyl-2-heptanoyl-sn-glycero-3-phosphocholine. The enzyme catalyses 1-hexadecanoyl-2-octadecanoyl-sn-glycero-3-phosphocholine + H2O = octadecanoate + 1-hexadecanoyl-sn-glycero-3-phosphocholine + H(+). It carries out the reaction 1-hexadecanoyl-2-octadecanoyl-sn-glycero-3-phosphocholine + H2O = 2-octadecanoyl-sn-glycero-3-phosphocholine + hexadecanoate + H(+). The catalysed reaction is 1-octadecanoyl-2-hexadecanoyl-sn-glycero-3-phosphocholine + H2O = 1-octadecanoyl-sn-glycero-3-phosphocholine + hexadecanoate + H(+). It catalyses the reaction 1-octadecanoyl-2-hexadecanoyl-sn-glycero-3-phosphocholine + H2O = 2-hexadecanoyl-sn-glycero-3-phosphocholine + octadecanoate + H(+). The enzyme catalyses 1-hexadecanoyl-2-(9Z,12Z-octadecadienoyl)-sn-glycero-3-phosphocholine + H2O = (9Z,12Z)-octadecadienoate + 1-hexadecanoyl-sn-glycero-3-phosphocholine + H(+). It carries out the reaction 1-hexadecanoyl-2-(9Z,12Z-octadecadienoyl)-sn-glycero-3-phosphocholine + H2O = 2-(9Z,12Z-octadecadienoyl)-sn-glycero-3-phosphocholine + hexadecanoate + H(+). The catalysed reaction is 1,2-di-(9Z-octadecenoyl)-sn-glycero-3-phosphocholine + H2O = 2-(9Z-octadecenoyl)-sn-glycero-3-phosphocholine + (9Z)-octadecenoate + H(+). It catalyses the reaction 1,2-dihexadecanoyl-sn-glycero-3-phosphocholine + H2O = hexadecanoyl-sn-glycero-3-phosphocholine + hexadecanoate + H(+). The enzyme catalyses 1,2-di-(9Z-octadecenoyl)-sn-glycero-3-phosphocholine + H2O = 1-(9Z-octadecenoyl)-sn-glycero-3-phosphocholine + (9Z)-octadecenoate + H(+). It carries out the reaction 1,2-di-(9Z-octadecenoyl)-sn-glycero-3-phosphoethanolamine + 1,2-dihexadecanoyl-sn-glycero-3-phosphocholine = hexadecanoyl-sn-glycero-3-phosphocholine + N-hexadecanoyl-1,2-di-(9Z-octadecenoyl)-sn-glycero-3-phosphoethanolamine + H(+). The catalysed reaction is 1,2-di-(9Z,12Z-octadecadienoyl)-sn-glycero-3-phosphocholine + H2O = 1-(9Z,12Z)-octadecadienoyl-sn-glycero-3-phosphocholine + (9Z,12Z)-octadecadienoate + H(+). Functionally, exhibits both phospholipase A1/2 and acyltransferase activities. Shows phospholipase A1 (PLA1) and A2 (PLA2), catalyzing the calcium-independent release of fatty acids from the sn-1 or sn-2 position of glycerophospholipids. For most substrates, PLA1 activity is much higher than PLA2 activity. Shows O-acyltransferase activity, catalyzing the transfer of a fatty acyl group from glycerophospholipid to the hydroxyl group of lysophospholipid. Shows N-acyltransferase activity,catalyzing the calcium-independent transfer of a fatty acyl group at the sn-1 position of phosphatidylcholine (PC) and other glycerophospholipids to the primary amine of phosphatidylethanolamine (PE), forming N-acylphosphatidylethanolamine (NAPE), which serves as precursor for N-acylethanolamines (NAEs). Exhibits high N-acyltransferase activity and low phospholipase A1/2 activity. Required for complete organelle rupture and degradation that occur during eye lens terminal differentiation, when fiber cells that compose the lens degrade all membrane-bound organelles in order to provide lens with transparency to allow the passage of light. Organelle membrane degradation is probably catalyzed by the phospholipase activity. Its function is as follows. (Microbial infection) Acts as a host factor for picornaviruses: required during early infection to promote viral genome release into the cytoplasm. In Mus musculus (Mouse), this protein is Phospholipase A and acyltransferase 3.